We begin with the raw amino-acid sequence, 189 residues long: Putative zinc finger protein ORF189 (189 aa).

The C2H2-type zinc finger occupies 114–137; it reads YVCPYCVSRFPTVRALKIHLKRRH.

This Acidianus two-tailed virus (ATV) protein is Putative zinc finger protein ORF189.